We begin with the raw amino-acid sequence, 131 residues long: Arsenate reductase 2 (131 aa).

Active-site nucleophile residues include C10, C82, and C89. 2 cysteine pairs are disulfide-bonded: C10/C82 and C82/C89.

Belongs to the low molecular weight phosphotyrosine protein phosphatase family. Thioredoxin-coupled ArsC subfamily.

It is found in the cytoplasm. It catalyses the reaction arsenate + [thioredoxin]-dithiol + H(+) = arsenite + [thioredoxin]-disulfide + H2O. Functionally, catalyzes the reduction of arsenate [As(V)] to arsenite [As(III)]. In Staphylococcus epidermidis (strain ATCC 35984 / DSM 28319 / BCRC 17069 / CCUG 31568 / BM 3577 / RP62A), this protein is Arsenate reductase 2.